A 363-amino-acid chain; its full sequence is 3-isopropylmalate dehydrogenase (363 aa).

An NAD(+)-binding site is contributed by 78–89 (GPKWGTGAVRPE). Residues Arg96, Arg106, Arg135, and Asp224 each contribute to the substrate site. Positions 224, 249, and 253 each coordinate Mg(2+). Residue 288-299 (GSAPDLPANKVN) participates in NAD(+) binding.

The protein belongs to the isocitrate and isopropylmalate dehydrogenases family. Homodimer. Mg(2+) is required as a cofactor. Requires Mn(2+) as cofactor.

The protein localises to the cytoplasm. It carries out the reaction (2R,3S)-3-isopropylmalate + NAD(+) = 4-methyl-2-oxopentanoate + CO2 + NADH. It functions in the pathway amino-acid biosynthesis; L-leucine biosynthesis; L-leucine from 3-methyl-2-oxobutanoate: step 3/4. Its function is as follows. Catalyzes the oxidation of 3-carboxy-2-hydroxy-4-methylpentanoate (3-isopropylmalate) to 3-carboxy-4-methyl-2-oxopentanoate. The product decarboxylates to 4-methyl-2 oxopentanoate. This Cyberlindnera jadinii (Torula yeast) protein is 3-isopropylmalate dehydrogenase (LEU2).